Consider the following 476-residue polypeptide: Adenosylhomocysteinase (476 aa).

Substrate contacts are provided by T67, D142, and E202. NAD(+) is bound at residue 203–205 (TTT). Residues K232 and D236 each coordinate substrate. NAD(+) contacts are provided by residues N237, 266–271 (GYGDVG), E289, N324, 345–347 (IGH), and N390.

Belongs to the adenosylhomocysteinase family. Requires NAD(+) as cofactor.

It localises to the cytoplasm. It carries out the reaction S-adenosyl-L-homocysteine + H2O = L-homocysteine + adenosine. It functions in the pathway amino-acid biosynthesis; L-homocysteine biosynthesis; L-homocysteine from S-adenosyl-L-homocysteine: step 1/1. May play a key role in the regulation of the intracellular concentration of adenosylhomocysteine. The protein is Adenosylhomocysteinase of Prochlorococcus marinus (strain MIT 9313).